The primary structure comprises 159 residues: MDKLKKVLSGQDTEDRSGLSEVVEASSLSWGTRIKGFIACFALGILCSVLGTLLLWVPRKGLGLFAVFYTLGNIMSIGSTVFLMGPLKQLKRMFEPTRLIATILVLLCFALTLCSAFLWNKGLALIFCILQSLALTWYSLSYIPYARDAVKKCFAVCLA.

M1 carries the N-acetylmethionine modification. Over 1–36 (MDKLKKVLSGQDTEDRSGLSEVVEASSLSWGTRIKG) the chain is Cytoplasmic. S9 is subject to Phosphoserine. The helical transmembrane segment at 37–57 (FIACFALGILCSVLGTLLLWV) threads the bilayer. Topologically, residues 58–63 (PRKGLG) are lumenal. The helical transmembrane segment at 64-84 (LFAVFYTLGNIMSIGSTVFLM) threads the bilayer. The Cytoplasmic segment spans residues 85 to 98 (GPLKQLKRMFEPTR). A helical membrane pass occupies residues 99–119 (LIATILVLLCFALTLCSAFLW). Residues 120–122 (NKG) lie on the Lumenal side of the membrane. A helical membrane pass occupies residues 123–143 (LALIFCILQSLALTWYSLSYI). Residues 144–159 (PYARDAVKKCFAVCLA) lie on the Cytoplasmic side of the membrane.

Belongs to the SFT2 family.

The protein resides in the membrane. Its function is as follows. May be involved in fusion of retrograde transport vesicles derived from an endocytic compartment with the Golgi complex. This chain is Vesicle transport protein SFT2B, found in Mus musculus (Mouse).